The chain runs to 143 residues: MITPTVKMRILSSSHLFYLALCLLTFTSSATAGPETLCGAELVDALQFVCGDRGFYFNKPTGYGSSSRRAPQTGIVDECCFRSCDLRRLEMYCAPLKPAKAARSVRAQRHTDMPKTQKYQPPSTNKKMKSQRRRKGSTFEEHK.

A signal peptide spans methionine 1–alanine 32. Residues glycine 33–threonine 61 form a b region. 3 cysteine pairs are disulfide-bonded: cysteine 38–cysteine 80, cysteine 50–cysteine 93, and cysteine 79–cysteine 84. A c region spans residues glycine 62 to threonine 73. The a stretch occupies residues glycine 74 to alanine 94. Residues proline 95–alanine 102 are d. Residues alanine 99–lysine 143 are disordered. A propeptide spans arginine 103–lysine 143 (e peptide). Over residues lysine 126 to glycine 136 the composition is skewed to basic residues.

Belongs to the insulin family. As to quaternary structure, forms a ternary complex with IGFR1 and ITGAV:ITGB3. Forms a ternary complex with IGFR1 and ITGA6:ITGB4. Forms a ternary complex with IGFBP3 and ALS.

The protein localises to the secreted. Functionally, the insulin-like growth factors, isolated from plasma, are structurally and functionally related to insulin but have a much higher growth-promoting activity. May be a physiological regulator of [1-14C]-2-deoxy-D-glucose (2DG) transport and glycogen synthesis in osteoblasts. Stimulates glucose transport in bone-derived osteoblastic (PyMS) cells and is effective at much lower concentrations than insulin, not only regarding glycogen and DNA synthesis but also with regard to enhancing glucose uptake. May play a role in synapse maturation. Ca(2+)-dependent exocytosis of IGF1 is required for sensory perception of smell in the olfactory bulb. Acts as a ligand for IGF1R. Binds to the alpha subunit of IGF1R, leading to the activation of the intrinsic tyrosine kinase activity which autophosphorylates tyrosine residues in the beta subunit thus initiating a cascade of down-stream signaling events leading to activation of the PI3K-AKT/PKB and the Ras-MAPK pathways. Binds to integrins ITGAV:ITGB3 and ITGA6:ITGB4. Its binding to integrins and subsequent ternary complex formation with integrins and IGFR1 are essential for IGF1 signaling. Induces the phosphorylation and activation of IGFR1, MAPK3/ERK1, MAPK1/ERK2 and AKT1. As part of the MAPK/ERK signaling pathway, acts as a negative regulator of apoptosis in cardiomyocytes via promotion of STUB1/CHIP-mediated ubiquitination and degradation of ICER-type isoforms of CREM. The polypeptide is Insulin-like growth factor 1 (Oryctolagus cuniculus (Rabbit)).